The primary structure comprises 160 residues: Endoribonuclease YbeY (160 aa).

Positions 125, 129, and 135 each coordinate Zn(2+).

This sequence belongs to the endoribonuclease YbeY family. Requires Zn(2+) as cofactor.

The protein localises to the cytoplasm. Functionally, single strand-specific metallo-endoribonuclease involved in late-stage 70S ribosome quality control and in maturation of the 3' terminus of the 16S rRNA. The polypeptide is Endoribonuclease YbeY (Leuconostoc citreum (strain KM20)).